An 849-amino-acid polypeptide reads, in one-letter code: Protein translocase subunit SecA (849 aa).

Residues glutamine 85, glycine 103–threonine 107, and aspartate 493 each bind ATP. Residues cysteine 832, cysteine 834, cysteine 843, and histidine 844 each coordinate Zn(2+).

It belongs to the SecA family. As to quaternary structure, monomer and homodimer. Part of the essential Sec protein translocation apparatus which comprises SecA, SecYEG and auxiliary proteins SecDF. Other proteins may also be involved. Requires Zn(2+) as cofactor.

It is found in the cell membrane. The protein resides in the cytoplasm. It catalyses the reaction ATP + H2O + cellular proteinSide 1 = ADP + phosphate + cellular proteinSide 2.. In terms of biological role, part of the Sec protein translocase complex. Interacts with the SecYEG preprotein conducting channel. Has a central role in coupling the hydrolysis of ATP to the transfer of proteins into and across the cell membrane, serving as an ATP-driven molecular motor driving the stepwise translocation of polypeptide chains across the membrane. The protein is Protein translocase subunit SecA of Streptococcus thermophilus (strain ATCC BAA-250 / LMG 18311).